A 152-amino-acid chain; its full sequence is Nucleoside diphosphate kinase A (152 aa).

ATP is bound by residues Lys12, Phe60, Arg88, and Thr94. A Glycyl lysine isopeptide (Lys-Gly) (interchain with G-Cter in ubiquitin) cross-link involves residue Lys100. ATP contacts are provided by Arg105 and Asn115. His118 (pros-phosphohistidine intermediate) is an active-site residue. A phosphoserine mark is found at Ser120, Ser122, and Ser125.

The protein belongs to the NDK family. Hexamer of two different chains: An and B (A6, A5B, A4B2, A3B3, A2B4, AB5, B6). Interacts with PRUNE1. Component of the SET complex, composed of at least ANP32A, APEX1, HMGB2, NME1, SET and TREX1. Within this complex, interacts directly with SET. Also interacts with TREX1, but only following translocation to the nucleus. The cofactor is Mg(2+).

It localises to the cytoplasm. Its subcellular location is the nucleus. The enzyme catalyses a 2'-deoxyribonucleoside 5'-diphosphate + ATP = a 2'-deoxyribonucleoside 5'-triphosphate + ADP. The catalysed reaction is a ribonucleoside 5'-diphosphate + ATP = a ribonucleoside 5'-triphosphate + ADP. With respect to regulation, autophosphorylation at His-118 increases serine/threonine protein kinase activity of the enzyme. Interaction with the SET complex inhibits exonuclease activity. Its function is as follows. Major role in the synthesis of nucleoside triphosphates other than ATP. The ATP gamma phosphate is transferred to the NDP beta phosphate via a ping-pong mechanism, using a phosphorylated active-site intermediate. Possesses nucleoside-diphosphate kinase, serine/threonine-specific protein kinase, geranyl and farnesyl pyrophosphate kinase, histidine protein kinase and 3'-5' exonuclease activities. Involved in cell proliferation, differentiation and development, signal transduction, G protein-coupled receptor endocytosis, and gene expression. Required for neural development including neural patterning and cell fate determination. During GZMA-mediated cell death, works in concert with TREX1. NME1 nicks one strand of DNA and TREX1 removes bases from the free 3' end to enhance DNA damage and prevent DNA end reannealing and rapid repair. The protein is Nucleoside diphosphate kinase A (NME1) of Canis lupus familiaris (Dog).